The chain runs to 731 residues: Elongation factor 2 (731 aa).

The tr-type G domain maps to 19 to 260 (KHIRNIGIVA…MVVHHLPNPL (242 aa)). GTP is bound by residues 28 to 35 (AHIDHGKT), 94 to 98 (DTPGH), and 148 to 151 (NKVD). Histidine 597 carries the post-translational modification Diphthamide.

Belongs to the TRAFAC class translation factor GTPase superfamily. Classic translation factor GTPase family. EF-G/EF-2 subfamily.

It is found in the cytoplasm. Its function is as follows. Catalyzes the GTP-dependent ribosomal translocation step during translation elongation. During this step, the ribosome changes from the pre-translocational (PRE) to the post-translocational (POST) state as the newly formed A-site-bound peptidyl-tRNA and P-site-bound deacylated tRNA move to the P and E sites, respectively. Catalyzes the coordinated movement of the two tRNA molecules, the mRNA and conformational changes in the ribosome. The polypeptide is Elongation factor 2 (Methanoregula boonei (strain DSM 21154 / JCM 14090 / 6A8)).